The chain runs to 184 residues: Peptide deformylase (184 aa).

Positions 92 and 134 each coordinate Fe cation. Glutamate 135 is an active-site residue. Residue histidine 138 participates in Fe cation binding.

This sequence belongs to the polypeptide deformylase family. It depends on Fe(2+) as a cofactor.

The catalysed reaction is N-terminal N-formyl-L-methionyl-[peptide] + H2O = N-terminal L-methionyl-[peptide] + formate. Its function is as follows. Removes the formyl group from the N-terminal Met of newly synthesized proteins. Requires at least a dipeptide for an efficient rate of reaction. N-terminal L-methionine is a prerequisite for activity but the enzyme has broad specificity at other positions. The polypeptide is Peptide deformylase (Psychrobacter arcticus (strain DSM 17307 / VKM B-2377 / 273-4)).